The primary structure comprises 442 residues: Lipoyl synthase, apicoplast (442 aa).

The signal sequence occupies residues 1-25; the sequence is MHVLTPSLYIYAFFIVCVRLKCGRS. A disordered region spans residues 92-154; it reads LLRSESATDE…EKKPDWFHVP (63 aa). The span at 109–127 shows a compositional bias: basic and acidic residues; the sequence is LKEKLKESPANWGKDKQEE. The [4Fe-4S] cluster site is built by C177, C182, C188, C203, C207, C210, and S418. The 219-residue stretch at 189 to 407 folds into the Radical SAM core domain; it reads WNIGTATIML…KEEGMKMGFK (219 aa).

It belongs to the radical SAM superfamily. Lipoyl synthase family. [4Fe-4S] cluster is required as a cofactor.

It is found in the plastid. It localises to the apicoplast. The catalysed reaction is [[Fe-S] cluster scaffold protein carrying a second [4Fe-4S](2+) cluster] + N(6)-octanoyl-L-lysyl-[protein] + 2 oxidized [2Fe-2S]-[ferredoxin] + 2 S-adenosyl-L-methionine + 4 H(+) = [[Fe-S] cluster scaffold protein] + N(6)-[(R)-dihydrolipoyl]-L-lysyl-[protein] + 4 Fe(3+) + 2 hydrogen sulfide + 2 5'-deoxyadenosine + 2 L-methionine + 2 reduced [2Fe-2S]-[ferredoxin]. It participates in protein modification; protein lipoylation via endogenous pathway; protein N(6)-(lipoyl)lysine from octanoyl-[acyl-carrier-protein]: step 2/2. Its function is as follows. Catalyzes the radical-mediated insertion of two sulfur atoms into the C-6 and C-8 positions of the octanoyl moiety bound to the lipoyl domains of lipoate-dependent enzymes, thereby converting the octanoylated domains into lipoylated derivatives. In Plasmodium vivax (strain Salvador I), this protein is Lipoyl synthase, apicoplast.